Consider the following 120-residue polypeptide: cAMP-responsive element-binding protein-like 2 (120 aa).

Positions 1–24 (MDDSKVVGGKVKKPGKRGRKPAKI) are disordered. The segment covering 10-21 (KVKKPGKRGRKP) has biased composition (basic residues). The bZIP domain occupies 23–86 (KIDLKAKLER…MAMDQGKIPS (64 aa)). Residues 29 to 60 (KLERSRQSARECRARKKLRYQYLEELVSSRER) form a basic motif region. Residues 62-69 (ICALREEL) are leucine-zipper. Residues 93-120 (TGEEQSKSQQNSSRHMKAGKTDANSNSW) form a disordered region.

This sequence belongs to the bZIP family. ATF subfamily. In terms of assembly, interacts with CREB1; regulates CREB1 phosphorylation, stability and transcriptional activity. Interacts with immediate-early (IE) protein BICP22 of bovine herpesvirus-1 (BHV-1). In terms of processing, phosphorylated by AMPK.

It is found in the nucleus. Probable regulator of CREB1 transcriptional activity which is involved in adipose cells differentiation. May also play a regulatory role in the cell cycle. The chain is cAMP-responsive element-binding protein-like 2 (CREBL2) from Bos taurus (Bovine).